Consider the following 70-residue polypeptide: DNA gyrase inhibitor YacG (70 aa).

Residues C7, C10, C26, and C30 each coordinate Zn(2+).

The protein belongs to the DNA gyrase inhibitor YacG family. As to quaternary structure, interacts with GyrB. Zn(2+) serves as cofactor.

Inhibits all the catalytic activities of DNA gyrase by preventing its interaction with DNA. Acts by binding directly to the C-terminal domain of GyrB, which probably disrupts DNA binding by the gyrase. The polypeptide is DNA gyrase inhibitor YacG (Shewanella sediminis (strain HAW-EB3)).